Consider the following 237-residue polypeptide: Ras modification protein ERF4 (237 aa).

Belongs to the ERF4 family. Interacts with ERF2.

It localises to the endoplasmic reticulum membrane. Its function is as follows. The ERF2-SHR5 complex is a palmitoyltransferase specific for Ras proteins. Palmitoylates RAS2, which is required for its proper plasma membrane localization. This chain is Ras modification protein ERF4 (SHR5), found in Saccharomyces cerevisiae (strain ATCC 204508 / S288c) (Baker's yeast).